The chain runs to 498 residues: Cytochrome P450 71B24 (498 aa).

A helical transmembrane segment spans residues M1–D21. Residue C442 participates in heme binding.

Belongs to the cytochrome P450 family. Heme is required as a cofactor.

The protein localises to the membrane. This Arabidopsis thaliana (Mouse-ear cress) protein is Cytochrome P450 71B24 (CYP71B24).